We begin with the raw amino-acid sequence, 1007 residues long: RNA-binding protein 26 (1007 aa).

Lys-94 participates in a covalent cross-link: Glycyl lysine isopeptide (Lys-Gly) (interchain with G-Cter in SUMO2). A Glycyl lysine isopeptide (Lys-Gly) (interchain with G-Cter in SUMO1); alternate cross-link involves residue Lys-106. Residue Lys-106 forms a Glycyl lysine isopeptide (Lys-Gly) (interchain with G-Cter in SUMO2); alternate linkage. Residues 106-118 (KKEEITKEEEREK) are compositionally biased toward basic and acidic residues. A disordered region spans residues 106-241 (KKEEITKEEE…YTPVSSVPSI (136 aa)). Phosphoserine is present on Ser-127. Over residues 134–168 (RYRENRSRDERKKDDRSRKRDYDRNPPRRDSYRDR) the composition is skewed to basic and acidic residues. Basic residues predominate over residues 169-186 (YNRRRGRSRSYSRSRSRS). 2 stretches are compositionally biased toward basic and acidic residues: residues 187–201 (WSKE…DRSR) and 209–227 (RSRE…RTDP). Positions 228-241 (LENNYTPVSSVPSI) are enriched in polar residues. The C3H1-type zinc-finger motif lies at 288–316 (PMPKKRCRDYDEKGFCMRGDMCPFDHGSD). Pro residues predominate over residues 334 to 388 (QPPVVEGPPPPGLPPPPPILTPPPVNLRPPVPPPGPLPPSLPPVTGPPPPLPPLQ). 2 disordered regions span residues 334–404 (QPPV…SSVP) and 460–519 (IGLT…TNSP). Over residues 394-404 (APPNSATSSVP) the composition is skewed to low complexity. At Ser-496 the chain carries Phosphoserine. Lys-510 is modified (N6-acetyllysine). At Ser-518 the chain carries Phosphoserine. Positions 532–606 (TKLELRKVPP…RFIKVYWHRE (75 aa)) constitute an RRM 1 domain. Ser-616 bears the Phosphoserine mark. 2 coiled-coil regions span residues 719–795 (DNNE…KAAS) and 823–847 (KKMQ…EAAK). The interval 853-884 (SGRGRGIHSRGRGAVHGRGRGRGRGRGVPGHA) is disordered. The segment covering 857-877 (RGIHSRGRGAVHGRGRGRGRG) has biased composition (basic residues). An RRM 2 domain is found at 891–960 (RALEISAFTE…QDLKLAWNKP (70 aa)). The tract at residues 966-1007 (AVETEEVEPDEEEFQEESLVDDSLLQDDDEEEEDNESRSWRR) is disordered. A compositionally biased stretch (acidic residues) spans 968-1000 (ETEEVEPDEEEFQEESLVDDSLLQDDDEEEEDN).

In terms of biological role, may be involved in the turnover of nuclear polyadenylated (pA+) RNA. The chain is RNA-binding protein 26 from Homo sapiens (Human).